Reading from the N-terminus, the 239-residue chain is Proteasome subunit beta type-6 (239 aa).

Position 2 is an N-acetylalanine (alanine 2). Positions 2–34 (AATLVAARGTRPAPAWGPEAIAPDWENREVSTG) are cleaved as a propeptide — removed in mature form. Threonine 35 acts as the Nucleophile in catalysis. Residue threonine 69 is modified to Phosphothreonine.

The protein belongs to the peptidase T1B family. The 26S proteasome consists of a 20S proteasome core and two 19S regulatory subunits. The 20S proteasome core is a barrel-shaped complex made of 28 subunits that are arranged in four stacked rings. The two outer rings are each formed by seven alpha subunits, and the two inner rings are formed by seven beta subunits. The proteolytic activity is exerted by three beta-subunits PSMB5, PSMB6 and PSMB7.

The protein resides in the cytoplasm. The protein localises to the nucleus. The catalysed reaction is Cleavage of peptide bonds with very broad specificity.. Its function is as follows. Component of the 20S core proteasome complex involved in the proteolytic degradation of most intracellular proteins. This complex plays numerous essential roles within the cell by associating with different regulatory particles. Associated with two 19S regulatory particles, forms the 26S proteasome and thus participates in the ATP-dependent degradation of ubiquitinated proteins. The 26S proteasome plays a key role in the maintenance of protein homeostasis by removing misfolded or damaged proteins that could impair cellular functions, and by removing proteins whose functions are no longer required. Associated with the PA200 or PA28, the 20S proteasome mediates ubiquitin-independent protein degradation. This type of proteolysis is required in several pathways including spermatogenesis (20S-PA200 complex) or generation of a subset of MHC class I-presented antigenic peptides (20S-PA28 complex). Within the 20S core complex, PSMB6 displays a peptidylglutamyl-hydrolyzing activity also termed postacidic or caspase-like activity, meaning that the peptides bond hydrolysis occurs directly after acidic residues. The sequence is that of Proteasome subunit beta type-6 (PSMB6) from Bos taurus (Bovine).